The following is a 230-amino-acid chain: U2 small nuclear ribonucleoprotein A' (230 aa).

LRR repeat units lie at residues 19–40 (KDRE…PFFP), 41–62 (RLRM…LANS), and 65–86 (GLTT…DPLR). The 39-residue stretch at 99 to 137 (NPVTRKEYYRLWIIWRIPSVRFLDYQKVKDAERAKAAEL) folds into the LRRCT domain. The interval 211–230 (GRIPGGALDGAGNDGDQMQL) is disordered. Residues 213–223 (IPGGALDGAGN) are compositionally biased toward gly residues.

Belongs to the U2 small nuclear ribonucleoprotein A family. In terms of assembly, associated with the spliceosome.

It is found in the nucleus. Functionally, involved in pre-mRNA splicing. The sequence is that of U2 small nuclear ribonucleoprotein A' (lea1) from Emericella nidulans (strain FGSC A4 / ATCC 38163 / CBS 112.46 / NRRL 194 / M139) (Aspergillus nidulans).